Here is a 241-residue protein sequence, read N- to C-terminus: 1-(5-phosphoribosyl)-5-[(5-phosphoribosylamino)methylideneamino] imidazole-4-carboxamide isomerase (241 aa).

Asp10 acts as the Proton acceptor in catalysis. Catalysis depends on Asp129, which acts as the Proton donor.

The protein belongs to the HisA/HisF family.

The protein localises to the cytoplasm. The catalysed reaction is 1-(5-phospho-beta-D-ribosyl)-5-[(5-phospho-beta-D-ribosylamino)methylideneamino]imidazole-4-carboxamide = 5-[(5-phospho-1-deoxy-D-ribulos-1-ylimino)methylamino]-1-(5-phospho-beta-D-ribosyl)imidazole-4-carboxamide. Its pathway is amino-acid biosynthesis; L-histidine biosynthesis; L-histidine from 5-phospho-alpha-D-ribose 1-diphosphate: step 4/9. The chain is 1-(5-phosphoribosyl)-5-[(5-phosphoribosylamino)methylideneamino] imidazole-4-carboxamide isomerase from Salinispora arenicola (strain CNS-205).